A 267-amino-acid polypeptide reads, in one-letter code: Hydroxyethylthiazole kinase 2 (267 aa).

M41 is a substrate binding site. Residues K116 and T166 each contribute to the ATP site. G193 contacts substrate.

It belongs to the Thz kinase family. Requires Mg(2+) as cofactor.

It carries out the reaction 5-(2-hydroxyethyl)-4-methylthiazole + ATP = 4-methyl-5-(2-phosphooxyethyl)-thiazole + ADP + H(+). The protein operates within cofactor biosynthesis; thiamine diphosphate biosynthesis; 4-methyl-5-(2-phosphoethyl)-thiazole from 5-(2-hydroxyethyl)-4-methylthiazole: step 1/1. Functionally, catalyzes the phosphorylation of the hydroxyl group of 4-methyl-5-beta-hydroxyethylthiazole (THZ). This is Hydroxyethylthiazole kinase 2 from Streptococcus pneumoniae (strain 70585).